A 378-amino-acid polypeptide reads, in one-letter code: Spermatogenic leucine zipper protein 1 (378 aa).

The segment at 1-31 is disordered; it reads MSDTDNSAEMPARCPSPNPAPGAKQEPPNSG. Serine 106 carries the phosphoserine modification. The segment at 116–122 is interaction with PPP1CC isoform gamma-2; that stretch reads KNKIRFK. Residues 116–127 are helix-loop-helix motif; sequence KNKIRFKDDLFI. The tract at residues 128 to 193 is basic motif; it reads HFDPEREQNT…HLRGEYRKLR (66 aa). Residues 182–233 adopt a coiled-coil conformation; it reads SLHLRGEYRKLRNNMEQLLQEADHWSKQHNELSELMRSYQECQNETQETTDK. Serine 207 is subject to Phosphoserine. The leucine-zipper stretch occupies residues 252 to 273; the sequence is LEEQVKKLSHDTHALHLIAALL.

In terms of assembly, interacts with PPP1CC isoform gamma-2. This interaction can prevent SPZ1 binding to the E-box and inhibits PPP1CC activity. In terms of processing, phosphorylated by MAPK1/ERK2 and MAPK3/ERK1. As to expression, expressed specifically in the testis and epidydimis. In the testis expressed in both germ cells and somatic cells (Sertoli and Leydig cells). Expressed in several tumor cell lines.

It localises to the cytoplasm. The protein localises to the nucleus. In terms of biological role, transcription factor that binds to the DNA sequence 5'-CANNTG-3'(E box) and the G-box motif. Directly binds to a guanine-rich region of the PCNA promoter and up-regulates its expression which in turn induces cell transformation and tumor formation. May play an important role in the regulation of cell proliferation and differentiation during spermatogenesis. This chain is Spermatogenic leucine zipper protein 1 (Spz1), found in Mus musculus (Mouse).